The sequence spans 505 residues: ATP synthase subunit alpha (505 aa).

171-178 (GDRQTGKT) serves as a coordination point for ATP.

It belongs to the ATPase alpha/beta chains family. In terms of assembly, F-type ATPases have 2 components, CF(1) - the catalytic core - and CF(0) - the membrane proton channel. CF(1) has five subunits: alpha(3), beta(3), gamma(1), delta(1), epsilon(1). CF(0) has three main subunits: a(1), b(2) and c(9-12). The alpha and beta chains form an alternating ring which encloses part of the gamma chain. CF(1) is attached to CF(0) by a central stalk formed by the gamma and epsilon chains, while a peripheral stalk is formed by the delta and b chains.

Its subcellular location is the cell inner membrane. It carries out the reaction ATP + H2O + 4 H(+)(in) = ADP + phosphate + 5 H(+)(out). In terms of biological role, produces ATP from ADP in the presence of a proton gradient across the membrane. The alpha chain is a regulatory subunit. This is ATP synthase subunit alpha from Nitratiruptor sp. (strain SB155-2).